Reading from the N-terminus, the 337-residue chain is tRNA N6-adenosine threonylcarbamoyltransferase (337 aa).

Fe cation contacts are provided by histidine 111 and histidine 115. Substrate is bound by residues 134-138, aspartate 167, glycine 180, and asparagine 272; that span reads LVSGG. Aspartate 300 is a Fe cation binding site.

The protein belongs to the KAE1 / TsaD family. Fe(2+) serves as cofactor.

It is found in the cytoplasm. The catalysed reaction is L-threonylcarbamoyladenylate + adenosine(37) in tRNA = N(6)-L-threonylcarbamoyladenosine(37) in tRNA + AMP + H(+). Functionally, required for the formation of a threonylcarbamoyl group on adenosine at position 37 (t(6)A37) in tRNAs that read codons beginning with adenine. Is involved in the transfer of the threonylcarbamoyl moiety of threonylcarbamoyl-AMP (TC-AMP) to the N6 group of A37, together with TsaE and TsaB. TsaD likely plays a direct catalytic role in this reaction. The polypeptide is tRNA N6-adenosine threonylcarbamoyltransferase (Salmonella arizonae (strain ATCC BAA-731 / CDC346-86 / RSK2980)).